We begin with the raw amino-acid sequence, 216 residues long: V-type ATP synthase subunit D (216 aa).

The protein belongs to the V-ATPase D subunit family.

Functionally, produces ATP from ADP in the presence of a proton gradient across the membrane. The sequence is that of V-type ATP synthase subunit D from Clostridium novyi (strain NT).